An 852-amino-acid polypeptide reads, in one-letter code: Bifunctional uridylyltransferase/uridylyl-removing enzyme (852 aa).

A uridylyltransferase region spans residues 1–318 (MPANLSSALE…STPLRVTLRI (318 aa)). Positions 319 to 672 (DDDYIQVNNQ…SRILPKSDSF (354 aa)) are uridylyl-removing. The 123-residue stretch at 436-558 (VDDHILTVVR…VQTHERLSAL (123 aa)) folds into the HD domain. ACT domains are found at residues 673 to 757 (QVMV…SRSR) and 785 to 852 (SVEI…EQLS).

This sequence belongs to the GlnD family. Mg(2+) is required as a cofactor.

The catalysed reaction is [protein-PII]-L-tyrosine + UTP = [protein-PII]-uridylyl-L-tyrosine + diphosphate. It catalyses the reaction [protein-PII]-uridylyl-L-tyrosine + H2O = [protein-PII]-L-tyrosine + UMP + H(+). Uridylyltransferase (UTase) activity is inhibited by glutamine, while glutamine activates uridylyl-removing (UR) activity. Modifies, by uridylylation and deuridylylation, the PII regulatory proteins (GlnB and homologs), in response to the nitrogen status of the cell that GlnD senses through the glutamine level. Under low glutamine levels, catalyzes the conversion of the PII proteins and UTP to PII-UMP and PPi, while under higher glutamine levels, GlnD hydrolyzes PII-UMP to PII and UMP (deuridylylation). Thus, controls uridylylation state and activity of the PII proteins, and plays an important role in the regulation of nitrogen assimilation and metabolism. The sequence is that of Bifunctional uridylyltransferase/uridylyl-removing enzyme from Neisseria meningitidis serogroup B (strain ATCC BAA-335 / MC58).